Here is a 475-residue protein sequence, read N- to C-terminus: Integrator complex subunit 15 (475 aa).

Residues 402 to 444 (YPHIHPGRPSPLSPHSPHQSTLSSPHSPHTVLTAHPTHPALAP) form a disordered region. A compositionally biased stretch (low complexity) spans 416–430 (HSPHQSTLSSPHSPH).

Belongs to the Integrator subunit 15 family. Component of the Integrator complex, composed of core subunits INTS1, INTS2, INTS3, INTS4, INTS5, INTS6, INTS7, INTS8, INTS9/RC74, INTS10, INTS11/CPSF3L, INTS12, INTS13, INTS14 and INTS15. The core complex associates with protein phosphatase 2A subunits PPP2CA and PPP2R1A, to form the Integrator-PP2A (INTAC) complex. INTS15 is part of the tail subcomplex, composed of INTS10, INTS13, INTS14 and INTS15.

The protein resides in the nucleus. Its subcellular location is the chromosome. Its function is as follows. Component of the integrator complex, a multiprotein complex that terminates RNA polymerase II (Pol II) transcription in the promoter-proximal region of genes. The integrator complex provides a quality checkpoint during transcription elongation by driving premature transcription termination of transcripts that are unfavorably configured for transcriptional elongation: the complex terminates transcription by (1) catalyzing dephosphorylation of the C-terminal domain (CTD) of Pol II subunit POLR2A/RPB1 and SUPT5H/SPT5, (2) degrading the exiting nascent RNA transcript via endonuclease activity and (3) promoting the release of Pol II from bound DNA. The integrator complex is also involved in terminating the synthesis of non-coding Pol II transcripts, such as enhancer RNAs (eRNAs), small nuclear RNAs (snRNAs), telomerase RNAs and long non-coding RNAs (lncRNAs). INTS15 is part of the integrator tail module that acts as a platform for the recruitment of transcription factors at promoters. Within the integrator complex, INTS15 is required to bridge different integrator modules. The protein is Integrator complex subunit 15 (ints15) of Danio rerio (Zebrafish).